A 128-amino-acid polypeptide reads, in one-letter code: Insulin-like growth factor 2 (128 aa).

An N-terminal signal peptide occupies residues 1–24 (MGISMGKSMLVLLTFLAFASCCIA). The interval 25–52 (AYRPSETLCGGELVDTLQFVCGDRGFYF) is b. 3 disulfide bridges follow: Cys-33–Cys-71, Cys-45–Cys-84, and Cys-70–Cys-75. The tract at residues 53–64 (SRPASRVSRRSR) is c. The tract at residues 65-85 (GIVEECCFRSCDLALLETYCA) is a. Positions 86-91 (TPAKSE) are d. Residues 92–128 (RDVSASLAVLPDNFPRYPVGKFFQYDTWRQSTQRLRR) constitute a propeptide, e peptide.

The protein belongs to the insulin family. As to quaternary structure, interacts with MYORG; this interaction is required for IGF2 secretion. Interacts with integrins ITGAV:ITGB3 and ITGA6:ITGB4; integrin-binding is required for IGF2 signaling. Proteolytically processed by PCSK4, proIGF2 is cleaved at Arg-128 and Arg-92 to generate big-IGF2 and mature IGF2.

Its subcellular location is the secreted. In terms of biological role, the insulin-like growth factors possess growth-promoting activity. Major fetal growth hormone in mammals. Plays a key role in regulating fetoplacental development. IGF2 is influenced by placental lactogen. Also involved in tissue differentiation. In adults, involved in glucose metabolism in adipose tissue, skeletal muscle and liver. Acts as a ligand for integrin which is required for IGF2 signaling. Positively regulates myogenic transcription factor MYOD1 function by facilitating the recruitment of transcriptional coactivators, thereby controlling muscle terminal differentiation. Inhibits myoblast differentiation and metabolism via increasing the mitochondrial respiration rate. Its function is as follows. Preptin undergoes glucose-mediated co-secretion with insulin, and acts as a physiological amplifier of glucose-mediated insulin secretion. Exhibits osteogenic properties by increasing osteoblast mitogenic activity through phosphoactivation of MAPK1 and MAPK3. This chain is Insulin-like growth factor 2, found in Cavia porcellus (Guinea pig).